The primary structure comprises 1028 residues: GPI inositol-deacylase (1028 aa).

A helical membrane pass occupies residues 51 to 71 (VFGLGLLLFCIVCMAYLSPFL). Residue Asn-166 is glycosylated (N-linked (GlcNAc...) asparagine). Residue Ser-231 is part of the active site. N-linked (GlcNAc...) asparagine glycosylation is found at Asn-299, Asn-530, Asn-586, and Asn-679. A run of 8 helical transmembrane segments spans residues 699–719 (LAVA…QFAL), 740–760 (FWLK…ISFI), 799–819 (WIGP…AFGI), 867–887 (IMIL…LLFL), 915–935 (SYLL…FVFL), 948–968 (SHHN…NAGL), 979–999 (ISKL…VIYG), and 1002–1022 (NLFW…FTSL).

The protein belongs to the GPI inositol-deacylase family.

It localises to the endoplasmic reticulum membrane. Its function is as follows. Involved in inositol deacylation of GPI-anchored proteins which plays important roles in the quality control and ER-associated degradation of GPI-anchored proteins. In Eremothecium gossypii (strain ATCC 10895 / CBS 109.51 / FGSC 9923 / NRRL Y-1056) (Yeast), this protein is GPI inositol-deacylase (BST1).